Reading from the N-terminus, the 678-residue chain is Penicillin-binding protein activator LpoA (678 aa).

Residues 1 to 26 (MVPSTFSRLKAARCLPVVLAALIFAG) form the signal peptide. The N-palmitoyl cysteine moiety is linked to residue C27. Residue C27 is the site of S-diacylglycerol cysteine attachment. 2 disordered regions span residues 302 to 340 (DVAEQPQPQTVDGVASPAQASVSDLTGDQPAAQPVPVSA) and 496 to 528 (ALTGTPITPRATTDSGMTTNNPTLQTTPTDDQF). 2 stretches are compositionally biased toward low complexity: residues 330-340 (QPAAQPVPVSA) and 513-528 (TTNNPTLQTTPTDDQF).

This sequence belongs to the LpoA family. As to quaternary structure, interacts with PBP1a.

It is found in the cell outer membrane. Functionally, regulator of peptidoglycan synthesis that is essential for the function of penicillin-binding protein 1A (PBP1a). This is Penicillin-binding protein activator LpoA from Shigella sonnei (strain Ss046).